Here is a 130-residue protein sequence, read N- to C-terminus: MPITQNYGTGRRKSSTARVFLRKGSGNISVNGRPLDEFFGRETARMIVRQPLELTKNVSNFDILITATGGGTTGQAGAIRLGIARALVEYDTSLKPELRKAGFMTRDPREVERKKVGLHKARRATQFSKR.

The segment at 111–130 is disordered; sequence VERKKVGLHKARRATQFSKR. Over residues 116–130 the composition is skewed to basic residues; the sequence is VGLHKARRATQFSKR.

It belongs to the universal ribosomal protein uS9 family.

The sequence is that of Small ribosomal subunit protein uS9 from Xylella fastidiosa (strain M23).